The chain runs to 137 residues: MLQPKRTKFRKTHKGRNRGLAQNGNKVSFGTFGLKATGRGRMTARQIEAARRAMTRHVKRQGKIWIRVFPDKPITNKPLEVRMGKGKGSVEYWVAEIQPGKVLYEMEGVSEELAREAFDLAARKLPFKTTFVTRTVM.

The span at 1-17 (MLQPKRTKFRKTHKGRN) shows a compositional bias: basic residues. The segment at 1–23 (MLQPKRTKFRKTHKGRNRGLAQN) is disordered.

This sequence belongs to the universal ribosomal protein uL16 family. In terms of assembly, part of the 50S ribosomal subunit.

Binds 23S rRNA and is also seen to make contacts with the A and possibly P site tRNAs. This Pseudoalteromonas translucida (strain TAC 125) protein is Large ribosomal subunit protein uL16.